The sequence spans 221 residues: Adenylate kinase (221 aa).

10–15 is a binding site for ATP; it reads GAGKGT. The segment at 30 to 59 is NMP; the sequence is STGDMLRAAVKAGTPLGLEAKRYMDAGELV. AMP-binding positions include Thr31, Arg36, 57–59, 85–88, and Gln92; these read ELV and GFPR. The LID stretch occupies residues 122–159; that stretch reads GRRMHPASGRTYHVKFNPPKVEGVDDVTGEPLIQRDDD. Residues Arg123 and 132–133 contribute to the ATP site; that span reads TY. Residues Arg156 and Arg167 each coordinate AMP. Gly207 provides a ligand contact to ATP.

The protein belongs to the adenylate kinase family. In terms of assembly, monomer.

The protein resides in the cytoplasm. The catalysed reaction is AMP + ATP = 2 ADP. The protein operates within purine metabolism; AMP biosynthesis via salvage pathway; AMP from ADP: step 1/1. Its function is as follows. Catalyzes the reversible transfer of the terminal phosphate group between ATP and AMP. Plays an important role in cellular energy homeostasis and in adenine nucleotide metabolism. The sequence is that of Adenylate kinase from Paraburkholderia phymatum (strain DSM 17167 / CIP 108236 / LMG 21445 / STM815) (Burkholderia phymatum).